Reading from the N-terminus, the 513-residue chain is L-arabinose transport ATP-binding protein AraG (513 aa).

ABC transporter domains lie at 6 to 243 and 264 to 508; these read LEMR…GMVG and VKNW…TKTA. 38–45 lines the ATP pocket; the sequence is GENGAGKS.

The protein belongs to the ABC transporter superfamily.

Its subcellular location is the cell membrane. It carries out the reaction L-arabinose(out) + ATP + H2O = L-arabinose(in) + ADP + phosphate + H(+). In terms of biological role, part of the binding-protein-dependent transport system for L-arabinose. Probably responsible for energy coupling to the transport system. This is L-arabinose transport ATP-binding protein AraG (araG) from Geobacillus stearothermophilus (Bacillus stearothermophilus).